Here is a 155-residue protein sequence, read N- to C-terminus: UPF0178 protein mlr0875 (155 aa).

The protein belongs to the UPF0178 family.

The protein is UPF0178 protein mlr0875 of Mesorhizobium japonicum (strain LMG 29417 / CECT 9101 / MAFF 303099) (Mesorhizobium loti (strain MAFF 303099)).